Here is a 600-residue protein sequence, read N- to C-terminus: Glutamine--fructose-6-phosphate aminotransferase [isomerizing] (600 aa).

The active-site Nucleophile; for GATase activity is the C2. The 216-residue stretch at 2–217 (CGIVGYIGTE…DEEIVIVTKD (216 aa)) folds into the Glutamine amidotransferase type-2 domain. 2 consecutive SIS domains span residues 283–422 (IRQA…AKGI) and 452–590 (IARD…VDKP). K595 functions as the For Fru-6P isomerization activity in the catalytic mechanism.

As to quaternary structure, homodimer.

It localises to the cytoplasm. The catalysed reaction is D-fructose 6-phosphate + L-glutamine = D-glucosamine 6-phosphate + L-glutamate. Functionally, catalyzes the first step in hexosamine metabolism, converting fructose-6P into glucosamine-6P using glutamine as a nitrogen source. The polypeptide is Glutamine--fructose-6-phosphate aminotransferase [isomerizing] (Halalkalibacterium halodurans (strain ATCC BAA-125 / DSM 18197 / FERM 7344 / JCM 9153 / C-125) (Bacillus halodurans)).